The sequence spans 257 residues: Pyridoxine 5'-phosphate synthase (257 aa).

Asn-6 is a 3-amino-2-oxopropyl phosphate binding site. Residue 8–9 participates in 1-deoxy-D-xylulose 5-phosphate binding; that stretch reads DH. Arg-17 serves as a coordination point for 3-amino-2-oxopropyl phosphate. His-42 (proton acceptor) is an active-site residue. Arg-44 and His-49 together coordinate 1-deoxy-D-xylulose 5-phosphate. The active-site Proton acceptor is the Glu-69. A 1-deoxy-D-xylulose 5-phosphate-binding site is contributed by Thr-99. Catalysis depends on His-211, which acts as the Proton donor. 3-amino-2-oxopropyl phosphate contacts are provided by residues Gly-212 and 233–234; that span reads GQ.

Belongs to the PNP synthase family. In terms of assembly, homooctamer; tetramer of dimers.

Its subcellular location is the cytoplasm. It catalyses the reaction 3-amino-2-oxopropyl phosphate + 1-deoxy-D-xylulose 5-phosphate = pyridoxine 5'-phosphate + phosphate + 2 H2O + H(+). Its pathway is cofactor biosynthesis; pyridoxine 5'-phosphate biosynthesis; pyridoxine 5'-phosphate from D-erythrose 4-phosphate: step 5/5. Functionally, catalyzes the complicated ring closure reaction between the two acyclic compounds 1-deoxy-D-xylulose-5-phosphate (DXP) and 3-amino-2-oxopropyl phosphate (1-amino-acetone-3-phosphate or AAP) to form pyridoxine 5'-phosphate (PNP) and inorganic phosphate. This Campylobacter fetus subsp. fetus (strain 82-40) protein is Pyridoxine 5'-phosphate synthase.